The primary structure comprises 332 residues: Phenol 2-monooxygenase, oxygenase component MhpL (332 aa).

Belongs to the TmoE/XamoE family.

It carries out the reaction phenol + NADH + O2 + H(+) = catechol + NAD(+) + H2O. It participates in aromatic compound metabolism; phenol degradation. In terms of biological role, part of a multicomponent enzyme which catalyzes the degradation of phenol and some of its methylated derivatives. This Acinetobacter pittii (strain PHEA-2) protein is Phenol 2-monooxygenase, oxygenase component MhpL (mphL).